The following is a 350-amino-acid chain: Putative aminopeptidase MJ0555 (350 aa).

A divalent metal cation-binding residues include histidine 62 and aspartate 175. The active-site Proton acceptor is glutamate 207. Positions 208, 230, and 321 each coordinate a divalent metal cation.

Belongs to the peptidase M42 family. It depends on a divalent metal cation as a cofactor.

The polypeptide is Putative aminopeptidase MJ0555 (Methanocaldococcus jannaschii (strain ATCC 43067 / DSM 2661 / JAL-1 / JCM 10045 / NBRC 100440) (Methanococcus jannaschii)).